The following is a 511-amino-acid chain: Aldehyde dehydrogenase X, mitochondrial (511 aa).

A mitochondrion-targeting transit peptide spans 1–11; the sequence is PRLFALHHSAT. Lys45 carries the post-translational modification N6-acetyllysine. Lys46 bears the N6-acetyllysine; alternate mark. Lys46 bears the N6-succinyllysine; alternate mark. At Lys75 the chain carries N6-succinyllysine. 256-261 contacts NAD(+); the sequence is GSTKVG. Glu279 functions as the Proton acceptor in the catalytic mechanism. Cys313 functions as the Nucleophile in the catalytic mechanism. Lys377, Lys393, and Lys420 each carry N6-acetyllysine; alternate. Residues Lys377, Lys393, and Lys420 each carry the N6-succinyllysine; alternate modification. N6-acetyllysine is present on Lys423.

This sequence belongs to the aldehyde dehydrogenase family. In terms of assembly, homotetramer.

It is found in the mitochondrion matrix. The catalysed reaction is an aldehyde + NAD(+) + H2O = a carboxylate + NADH + 2 H(+). It participates in alcohol metabolism; ethanol degradation; acetate from ethanol: step 2/2. Functionally, ALDHs play a major role in the detoxification of alcohol-derived acetaldehyde. They are involved in the metabolism of corticosteroids, biogenic amines, neurotransmitters, and lipid peroxidation. In the cornea, this enzyme may help in the absorption of the damaging UV-B, as well as in the detoxification of the UV-induced peroxidic aldehydes. The polypeptide is Aldehyde dehydrogenase X, mitochondrial (ALDH1B1) (Bos taurus (Bovine)).